Reading from the N-terminus, the 344-residue chain is Biotin synthase (344 aa).

The 228-residue stretch at alanine 40–arginine 267 folds into the Radical SAM core domain. Cysteine 55, cysteine 59, and cysteine 62 together coordinate [4Fe-4S] cluster. [2Fe-2S] cluster contacts are provided by cysteine 99, cysteine 130, cysteine 190, and arginine 262.

This sequence belongs to the radical SAM superfamily. Biotin synthase family. Homodimer. It depends on [4Fe-4S] cluster as a cofactor. Requires [2Fe-2S] cluster as cofactor.

It carries out the reaction (4R,5S)-dethiobiotin + (sulfur carrier)-SH + 2 reduced [2Fe-2S]-[ferredoxin] + 2 S-adenosyl-L-methionine = (sulfur carrier)-H + biotin + 2 5'-deoxyadenosine + 2 L-methionine + 2 oxidized [2Fe-2S]-[ferredoxin]. The protein operates within cofactor biosynthesis; biotin biosynthesis; biotin from 7,8-diaminononanoate: step 2/2. In terms of biological role, catalyzes the conversion of dethiobiotin (DTB) to biotin by the insertion of a sulfur atom into dethiobiotin via a radical-based mechanism. In Xanthomonas euvesicatoria pv. vesicatoria (strain 85-10) (Xanthomonas campestris pv. vesicatoria), this protein is Biotin synthase.